The following is a 636-amino-acid chain: Transcriptional repressor CTCFL (636 aa).

3 disordered regions span residues 17-38 (KEQKLKPGDLEEEKEEDGVQRV), 160-195 (ENPELTPDLDESTALKKPEEDEKDQLPPQGETDKRE), and 222-257 (LEEQQDPPAANQTSVPGAKAAKPKRRRQTKGKPQSF). Acidic residues predominate over residues 160–170 (ENPELTPDLDE). Basic residues predominate over residues 242-251 (AKPKRRRQTK). C2H2-type zinc fingers lie at residues 257-279 (FQCDTCPFTSSKLSTFNRHIKIH), 285-307 (HLCHLCLKAFRTVTLLRNHVNTH), 313-336 (HKCRDCDMAFVTSGELVRHRRYKH), 342-364 (FKCSLCKYASVEASKMKRHIRSH), 370-392 (FQCCQCAYASRDSYKLKRHMRTH), 398-421 (YECPTCHVRFTQSGTMKIHIAQKH), 428-451 (YECPHCATIIARKSDLRVHLRNLH), 458-480 (MKCRYCPAGFHERYALIQHQRTH), 486-508 (FKCKQCDYACKQERCLKAHMRMH), 514-537 (FSCLACNKHFRQKQLLTVHLRKYH), and 546-572 (HLCLKCDKRFSRWSNLQRHRKKCDPEH). Residues 562 to 624 (QRHRKKCDPE…AAGSQSPDHG (63 aa)) form a disordered region. Residues 568–583 (CDPEHETLAPNKDRRP) show a composition bias toward basic and acidic residues.

This sequence belongs to the CTCF zinc-finger protein family. Interacts with histones, PRMT7 and SETD1A. Interacts (via N-terminus) with BAG6/BAT3. As to expression, testis-specific.

Its subcellular location is the cytoplasm. The protein localises to the nucleus. Testis-specific DNA binding protein responsible for insulator function, nuclear architecture and transcriptional control, which probably acts by recruiting epigenetic chromatin modifiers. Plays a key role in gene imprinting in male germline, by participating in the establishment of differential methylation at the IGF2/H19 imprinted control region (ICR). Directly binds the unmethylated H19 ICR and recruits the PRMT7 methyltransferase, leading to methylate histone H4 'Arg-3' to form H4R3sme2. This probably leads to recruit de novo DNA methyltransferases at these sites. Seems to act as tumor suppressor. In association with DNMT1 and DNMT3B, involved in activation of BAG1 gene expression by binding to its promoter. Required for dimethylation of H3 lysine 4 (H3K4me2) of MYC and BRCA1 promoters. The chain is Transcriptional repressor CTCFL (Ctcfl) from Mus musculus (Mouse).